Reading from the N-terminus, the 209-residue chain is Nuclear transcription factor Y subunit beta (209 aa).

The interval Met-1–Tyr-53 is a domain. The tract at residues Asp-31 to Pro-52 is disordered. The span at Gly-41–Pro-52 shows a compositional bias: basic and acidic residues. The interval Arg-54–Arg-143 is b domain. A DNA-binding region spans residues Leu-60–Ala-66. The segment at Val-87–Ile-98 is subunit association domain (SAD). Residues Glu-144–Thr-209 are c domain.

This sequence belongs to the NFYB/HAP3 subunit family. In terms of assembly, heterotrimeric transcription factor composed of three components, NF-YA, NF-YB and NF-YC. NF-YB and NF-YC must interact and dimerize for NF-YA association and DNA binding.

It localises to the nucleus. Functionally, component of the sequence-specific heterotrimeric transcription factor (NF-Y) which specifically recognizes a 5'-CCAAT-3' box motif found in the promoters of its target genes. NF-Y can function as both an activator and a repressor, depending on its interacting cofactors. In Petromyzon marinus (Sea lamprey), this protein is Nuclear transcription factor Y subunit beta (NFYB).